A 368-amino-acid chain; its full sequence is Agmatine deiminase (368 aa).

The active-site Amidino-cysteine intermediate is Cys357.

The protein belongs to the agmatine deiminase family. In terms of assembly, homodimer.

The enzyme catalyses agmatine + H2O = N-carbamoylputrescine + NH4(+). The protein operates within amine and polyamine biosynthesis; putrescine biosynthesis via agmatine pathway; N-carbamoylputrescine from agmatine: step 1/1. Functionally, mediates the hydrolysis of agmatine into N-carbamoylputrescine in the arginine decarboxylase (ADC) pathway of putrescine biosynthesis, a basic polyamine. This chain is Agmatine deiminase, found in Pseudomonas savastanoi pv. phaseolicola (strain 1448A / Race 6) (Pseudomonas syringae pv. phaseolicola (strain 1448A / Race 6)).